Here is a 171-residue protein sequence, read N- to C-terminus: Sec-independent protein translocase protein TatB (171 aa).

A helical membrane pass occupies residues 2–22; it reads FDGIGFMELLLIGVLGLVVLG. Residues 69 to 171 form a disordered region; that stretch reads SKGLSNLSPE…DTRSNPKANG (103 aa). Polar residues predominate over residues 88-97; that stretch reads QAAQSVNRPY. Composition is skewed to low complexity over residues 114 to 130 and 138 to 158; these read HSPV…HTSP and PTAT…SEPS. Residues 160–171 show a composition bias toward polar residues; sequence GADTRSNPKANG.

It belongs to the TatB family. The Tat system comprises two distinct complexes: a TatABC complex, containing multiple copies of TatA, TatB and TatC subunits, and a separate TatA complex, containing only TatA subunits. Substrates initially bind to the TatABC complex, which probably triggers association of the separate TatA complex to form the active translocon.

The protein resides in the cell inner membrane. Functionally, part of the twin-arginine translocation (Tat) system that transports large folded proteins containing a characteristic twin-arginine motif in their signal peptide across membranes. Together with TatC, TatB is part of a receptor directly interacting with Tat signal peptides. TatB may form an oligomeric binding site that transiently accommodates folded Tat precursor proteins before their translocation. This is Sec-independent protein translocase protein TatB from Shewanella baltica (strain OS185).